We begin with the raw amino-acid sequence, 184 residues long: Photosystem I assembly protein Ycf4 (184 aa).

2 consecutive transmembrane segments (helical) span residues 22-42 (FFWACILFLGSLGFLVVGTSS) and 57-77 (ISFFPQGIVMSFYGIAGLFIS).

It belongs to the Ycf4 family.

It is found in the plastid. It localises to the chloroplast thylakoid membrane. Its function is as follows. Seems to be required for the assembly of the photosystem I complex. This Lemna minor (Common duckweed) protein is Photosystem I assembly protein Ycf4.